Here is a 405-residue protein sequence, read N- to C-terminus: Methylamine dehydrogenase heavy chain (405 aa).

The signal sequence occupies residues 1–36 (MTTFDHPSMIRQPKPTGLAGGLVLAALMLSSSLALA).

Belongs to the aromatic amine dehydrogenase heavy chain family. Tetramer of two light and two heavy chains.

It localises to the periplasm. The catalysed reaction is 2 oxidized [amicyanin] + methylamine + H2O = 2 reduced [amicyanin] + formaldehyde + NH4(+) + 2 H(+). Its function is as follows. Methylamine dehydrogenase carries out the oxidation of methylamine. Electrons are passed from methylamine dehydrogenase to amicyanin. This is Methylamine dehydrogenase heavy chain (mauB) from Methylophilus methylotrophus (Bacterium W3A1).